The following is a 640-amino-acid chain: Serine/threonine-protein kinase WNG1 (640 aa).

The signal sequence occupies residues 1–70 (MPEQDLASGF…GVLCTVEAGA (70 aa)). 2 disordered regions span residues 100 to 222 (PEVT…AQPT) and 237 to 280 (SHPD…DASN). Residues 104–120 (HASSEGSPQFESSLSQQ) show a composition bias toward polar residues. A compositionally biased stretch (basic and acidic residues) spans 124–141 (RPADRGEAHNGEEPRKDA). Residues 175-186 (QRQASSAAESLA) are compositionally biased toward low complexity. Over residues 248 to 279 (FSKKQEGRRERRLAVRGDDSFARGHNRDRDAS) the composition is skewed to basic and acidic residues. The Protein kinase domain maps to 291–593 (WAKIAALATG…LKQVMEDPYF (303 aa)). ATP is bound at residue Lys395. Asp486 (proton acceptor) is an active-site residue. The tract at residues 609–640 (PFRGDFSIDDPDAGGKMYIPPSKEQDHEQENE) is disordered. Residues 631–640 (KEQDHEQENE) are compositionally biased toward basic and acidic residues.

Belongs to the protein kinase superfamily. STE Ser/Thr protein kinase family. WNG subfamily. The cofactor is Mg(2+).

The protein resides in the cytoplasmic granule. Its subcellular location is the secreted. It localises to the parasitophorous vacuole lumen. It catalyses the reaction L-seryl-[protein] + ATP = O-phospho-L-seryl-[protein] + ADP + H(+). It carries out the reaction L-threonyl-[protein] + ATP = O-phospho-L-threonyl-[protein] + ADP + H(+). In terms of biological role, serine/threonine-protein kinase which, at the tachyzoite stage, phosphorylates several parasitophorous vacuole (PV)-resident proteins such as GRA2, GRA6 and GRA7. By phosphorylating GRA2 and GRA6, regulates the formation of a functional intravacuolar network (IVN); IVN is composed of membranous tubules that bud from the PV membrane into the vacuolar lumen. Plays a role in the establishement of chronic infection in the host by controlling cyst formation in the host tissues. This Toxoplasma gondii protein is Serine/threonine-protein kinase WNG1.